The chain runs to 300 residues: ETS homologous factor (300 aa).

Residues 29–115 (STCNVSSGFF…SNLQHLKWNG (87 aa)) form the PNT domain. The tract at residues 179–204 (LPIAESPDTKKEQDHPTKPHTKKHNP) is disordered. Positions 185-195 (PDTKKEQDHPT) are enriched in basic and acidic residues. Positions 207–289 (THLWEFIRDI…DGRRLVYKFG (83 aa)) form a DNA-binding region, ETS.

The protein belongs to the ETS family.

It localises to the nucleus. Transcriptional activator that may play a role in regulating epithelial cell differentiation and proliferation. May act as a repressor for a specific subset of ETS/AP-1-responsive genes, and as a modulator of the nuclear response to mitogen-activated protein kinase signaling cascades. Binds to DNA sequences containing the consensus nucleotide core sequence GGAA. Involved in regulation of TNFRSF10B/DR5 expression through Ets-binding sequences on the TNFRSF10B/DR5 promoter. The protein is ETS homologous factor (EHF) of Bos taurus (Bovine).